We begin with the raw amino-acid sequence, 177 residues long: Sec-independent protein translocase protein TatB (177 aa).

The chain crosses the membrane as a helical span at residues 1–21; sequence MFDFAWSEIAVIGVVALVVIG. The span at 136–146 shows a compositional bias: basic and acidic residues; the sequence is REKTVSSETAR. Residues 136 to 177 form a disordered region; that stretch reads REKTVSSETARRAATAPAFIPPGEAFRSARRAPAFIPPADQG.

This sequence belongs to the TatB family. In terms of assembly, the Tat system comprises two distinct complexes: a TatABC complex, containing multiple copies of TatA, TatB and TatC subunits, and a separate TatA complex, containing only TatA subunits. Substrates initially bind to the TatABC complex, which probably triggers association of the separate TatA complex to form the active translocon.

It localises to the cell inner membrane. Part of the twin-arginine translocation (Tat) system that transports large folded proteins containing a characteristic twin-arginine motif in their signal peptide across membranes. Together with TatC, TatB is part of a receptor directly interacting with Tat signal peptides. TatB may form an oligomeric binding site that transiently accommodates folded Tat precursor proteins before their translocation. The protein is Sec-independent protein translocase protein TatB of Granulibacter bethesdensis (strain ATCC BAA-1260 / CGDNIH1).